The chain runs to 148 residues: Large ribosomal subunit protein uL15 (148 aa).

The tract at residues 1 to 51 (MNLSNLKPAEGSTKTRKRIGRGAGSGLGGTSTRGHKGAKSRSGYSKKVGFE) is disordered. Residues 21-31 (RGAGSGLGGTS) are compositionally biased toward gly residues.

It belongs to the universal ribosomal protein uL15 family. In terms of assembly, part of the 50S ribosomal subunit.

Binds to the 23S rRNA. The protein is Large ribosomal subunit protein uL15 of Bacteroides thetaiotaomicron (strain ATCC 29148 / DSM 2079 / JCM 5827 / CCUG 10774 / NCTC 10582 / VPI-5482 / E50).